Reading from the N-terminus, the 233-residue chain is Orotidine 5'-phosphate decarboxylase (233 aa).

Residues D9, K31, 58-67 (DLKLHDIPNT), T120, R182, Q191, G211, and R212 each bind substrate. The active-site Proton donor is the K60.

This sequence belongs to the OMP decarboxylase family. Type 1 subfamily. Homodimer.

It carries out the reaction orotidine 5'-phosphate + H(+) = UMP + CO2. Its pathway is pyrimidine metabolism; UMP biosynthesis via de novo pathway; UMP from orotate: step 2/2. In terms of biological role, catalyzes the decarboxylation of orotidine 5'-monophosphate (OMP) to uridine 5'-monophosphate (UMP). The chain is Orotidine 5'-phosphate decarboxylase from Listeria monocytogenes serotype 4b (strain CLIP80459).